Here is a 369-residue protein sequence, read N- to C-terminus: DNA replication and repair protein RecF (369 aa).

Residue 30 to 37 coordinates ATP; the sequence is GQNAQGKT.

This sequence belongs to the RecF family.

The protein resides in the cytoplasm. Its function is as follows. The RecF protein is involved in DNA metabolism; it is required for DNA replication and normal SOS inducibility. RecF binds preferentially to single-stranded, linear DNA. It also seems to bind ATP. This chain is DNA replication and repair protein RecF, found in Acetivibrio thermocellus (strain ATCC 27405 / DSM 1237 / JCM 9322 / NBRC 103400 / NCIMB 10682 / NRRL B-4536 / VPI 7372) (Clostridium thermocellum).